Reading from the N-terminus, the 300-residue chain is Ribosomal protein L11 methyltransferase (300 aa).

The S-adenosyl-L-methionine site is built by T152, G173, D195, and N234.

This sequence belongs to the methyltransferase superfamily. PrmA family.

Its subcellular location is the cytoplasm. The catalysed reaction is L-lysyl-[protein] + 3 S-adenosyl-L-methionine = N(6),N(6),N(6)-trimethyl-L-lysyl-[protein] + 3 S-adenosyl-L-homocysteine + 3 H(+). Methylates ribosomal protein L11. The sequence is that of Ribosomal protein L11 methyltransferase from Burkholderia vietnamiensis (strain G4 / LMG 22486) (Burkholderia cepacia (strain R1808)).